The sequence spans 66 residues: Large ribosomal subunit protein bL35 (66 aa).

This sequence belongs to the bacterial ribosomal protein bL35 family.

In Borreliella burgdorferi (strain ATCC 35210 / DSM 4680 / CIP 102532 / B31) (Borrelia burgdorferi), this protein is Large ribosomal subunit protein bL35.